The following is a 144-amino-acid chain: uncharacterized protein (144 aa).

In terms of domain architecture, HIT spans 13-120; it reads IFCGIVEGNV…VPKYETGLGF (108 aa). Positions 105 to 109 match the Histidine triad motif motif; it reads HYHMH.

This is an uncharacterized protein from Mycoplasma pneumoniae (strain ATCC 29342 / M129 / Subtype 1) (Mycoplasmoides pneumoniae).